Reading from the N-terminus, the 312-residue chain is Ribonuclease Z (312 aa).

His-62, His-64, Asp-66, His-67, His-144, Asp-215, and His-273 together coordinate Zn(2+). Asp-66 (proton acceptor) is an active-site residue.

Belongs to the RNase Z family. In terms of assembly, homodimer. Zn(2+) is required as a cofactor.

The enzyme catalyses Endonucleolytic cleavage of RNA, removing extra 3' nucleotides from tRNA precursor, generating 3' termini of tRNAs. A 3'-hydroxy group is left at the tRNA terminus and a 5'-phosphoryl group is left at the trailer molecule.. In terms of biological role, zinc phosphodiesterase, which displays some tRNA 3'-processing endonuclease activity. Probably involved in tRNA maturation, by removing a 3'-trailer from precursor tRNA. This chain is Ribonuclease Z, found in Prochlorococcus marinus (strain MIT 9301).